We begin with the raw amino-acid sequence, 440 residues long: Ribosomal protein uS12 methylthiotransferase RimO (440 aa).

One can recognise an MTTase N-terminal domain in the interval 5-116 (PTIAISHLGC…IVSVIERAEQ (112 aa)). Cysteine 14, cysteine 50, cysteine 79, cysteine 154, cysteine 158, and cysteine 161 together coordinate [4Fe-4S] cluster. The 231-residue stretch at 140 to 370 (TTTEGVAYLR…ALQQPISWRK (231 aa)) folds into the Radical SAM core domain. Residues 372–438 (QQEVGKTVEV…EYDLFGQVVS (67 aa)) enclose the TRAM domain.

This sequence belongs to the methylthiotransferase family. RimO subfamily. The cofactor is [4Fe-4S] cluster.

It is found in the cytoplasm. It carries out the reaction L-aspartate(89)-[ribosomal protein uS12]-hydrogen + (sulfur carrier)-SH + AH2 + 2 S-adenosyl-L-methionine = 3-methylsulfanyl-L-aspartate(89)-[ribosomal protein uS12]-hydrogen + (sulfur carrier)-H + 5'-deoxyadenosine + L-methionine + A + S-adenosyl-L-homocysteine + 2 H(+). In terms of biological role, catalyzes the methylthiolation of an aspartic acid residue of ribosomal protein uS12. The polypeptide is Ribosomal protein uS12 methylthiotransferase RimO (Nostoc sp. (strain PCC 7120 / SAG 25.82 / UTEX 2576)).